Reading from the N-terminus, the 373-residue chain is Probable tRNA sulfurtransferase (373 aa).

One can recognise a THUMP domain in the interval 54–158 (NKNIEELSKV…NDVAYFYHKI (105 aa)). Residues 176–177 (LF), 201–202 (NF), K256, G278, and Q287 each bind ATP.

It belongs to the ThiI family.

Its subcellular location is the cytoplasm. It catalyses the reaction [ThiI sulfur-carrier protein]-S-sulfanyl-L-cysteine + a uridine in tRNA + 2 reduced [2Fe-2S]-[ferredoxin] + ATP + H(+) = [ThiI sulfur-carrier protein]-L-cysteine + a 4-thiouridine in tRNA + 2 oxidized [2Fe-2S]-[ferredoxin] + AMP + diphosphate. The enzyme catalyses [ThiS sulfur-carrier protein]-C-terminal Gly-Gly-AMP + S-sulfanyl-L-cysteinyl-[cysteine desulfurase] + AH2 = [ThiS sulfur-carrier protein]-C-terminal-Gly-aminoethanethioate + L-cysteinyl-[cysteine desulfurase] + A + AMP + 2 H(+). It functions in the pathway cofactor biosynthesis; thiamine diphosphate biosynthesis. Functionally, catalyzes the ATP-dependent transfer of a sulfur to tRNA to produce 4-thiouridine in position 8 of tRNAs, which functions as a near-UV photosensor. Also catalyzes the transfer of sulfur to the sulfur carrier protein ThiS, forming ThiS-thiocarboxylate. This is a step in the synthesis of thiazole, in the thiamine biosynthesis pathway. The sulfur is donated as persulfide by IscS. This chain is Probable tRNA sulfurtransferase, found in Saccharolobus islandicus (strain M.16.27) (Sulfolobus islandicus).